A 379-amino-acid chain; its full sequence is tRNA-specific 2-thiouridylase MnmA (379 aa).

ATP contacts are provided by residues 9 to 16 and M35; that span reads AMSGGVDS. The interval 94–96 is interaction with target base in tRNA; sequence NPD. The Nucleophile role is filled by C99. Cysteines 99 and 195 form a disulfide. G123 is a binding site for ATP. The interval 145–147 is interaction with tRNA; it reads KDQ. The Cysteine persulfide intermediate role is filled by C195. Residues 307-308 are interaction with tRNA; the sequence is RY.

This sequence belongs to the MnmA/TRMU family.

Its subcellular location is the cytoplasm. The catalysed reaction is S-sulfanyl-L-cysteinyl-[protein] + uridine(34) in tRNA + AH2 + ATP = 2-thiouridine(34) in tRNA + L-cysteinyl-[protein] + A + AMP + diphosphate + H(+). In terms of biological role, catalyzes the 2-thiolation of uridine at the wobble position (U34) of tRNA, leading to the formation of s(2)U34. The protein is tRNA-specific 2-thiouridylase MnmA of Xylella fastidiosa (strain M12).